The following is a 631-amino-acid chain: Shootin-1 (631 aa).

N-acetylmethionine is present on methionine 1. A phosphoserine mark is found at serine 3 and serine 4. Positions 7–353 (EKQLQLITSL…RVNQSENSVP (347 aa)) form a coiled coil. Serine 101 carries the phosphoserine; by PAK1 modification. Serine 249 bears the Phosphoserine mark. The segment at 343 to 511 (KRVNQSENSV…SESKSMPVLG (169 aa)) is disordered. A compositionally biased stretch (pro residues) spans 352 to 369 (VPPPPPPPPPLPPPPPNP). Serine 375 bears the Phosphoserine mark. The segment covering 403–418 (TDLKRQAVEEMMDRIK) has biased composition (basic and acidic residues). Polar residues predominate over residues 456–465 (LNKSTSSRSL). Serine 473 bears the Phosphoserine mark. Threonine 487 carries the phosphothreonine modification. Residues 490-505 (ADSSSPTGILATSESK) are compositionally biased toward polar residues. Serine 494 carries the phosphoserine modification. Phosphothreonine is present on threonine 496. A phosphoserine mark is found at serine 506, serine 515, serine 532, and serine 534. Disordered stretches follow at residues 524 to 566 (KTLE…IGCR) and 579 to 631 (VVVL…SSNC). Threonine 537 carries the post-translational modification Phosphothreonine. Residues 550-561 (CTSSKVTFQPPS) show a composition bias toward polar residues. Basic and acidic residues predominate over residues 590 to 631 (PQTKDQVAEKDPTQHKEDEGEIQPENKEDSIENVRETDSSNC).

Belongs to the shootin family. In terms of assembly, interacts with L1CAM; this interaction occurs in axonal growth cones. Interacts with actin filament retrograde flow; this interaction is enhanced in a netrin-1- and PAK1-dependent manner and promotes F-actin-substrate coupling and concomitant formation of traction forces at axonal growth cones. Interacts with RUFY3. Interacts with PFN2. Interacts (via N-terminus) with KIF20B; this interaction is direct and promotes the association of SHTN1 to microtubules in primary neurons. Associates with microtubule. In terms of processing, phosphorylated on Ser-101 and Ser-249 by PAK1 through a CDC42- and RAC1-dependent signaling pathway, which enhances its association with F-actin retrograde flow in filopodia and lamellipodia of axonal growth cones. Phosphorylation on Ser-101 and Ser-249 is increased by netrin-1.

It is found in the perikaryon. Its subcellular location is the cell projection. The protein resides in the axon. The protein localises to the growth cone. It localises to the cytoplasm. It is found in the cytoskeleton. Its subcellular location is the filopodium. The protein resides in the lamellipodium. Functionally, involved in the generation of internal asymmetric signals required for neuronal polarization and neurite outgrowth. Mediates netrin-1-induced F-actin-substrate coupling or 'clutch engagement' within the axon growth cone through activation of CDC42, RAC1 and PAK1-dependent signaling pathway, thereby converting the F-actin retrograde flow into traction forces, concomitantly with filopodium extension and axon outgrowth. Plays a role in cytoskeletal organization by regulating the subcellular localization of phosphoinositide 3-kinase (PI3K) activity at the axonal growth cone. Also plays a role in regenerative neurite outgrowth. In the developing cortex, cooperates with KIF20B to promote both the transition from the multipolar to the bipolar stage and the radial migration of cortical neurons from the ventricular zone toward the superficial layer of the neocortex. Involved in the accumulation of phosphatidylinositol 3,4,5-trisphosphate (PIP3) in the growth cone of primary hippocampal neurons. The polypeptide is Shootin-1 (Homo sapiens (Human)).